The chain runs to 445 residues: Xylose isomerase (445 aa).

Catalysis depends on residues His99 and Asp102. Mg(2+) is bound by residues Glu230, Glu266, His269, Asp294, Asp305, Asp307, and Asp337.

It belongs to the xylose isomerase family. As to quaternary structure, homotetramer. The cofactor is Mg(2+).

It is found in the cytoplasm. The catalysed reaction is alpha-D-xylose = alpha-D-xylulofuranose. In Geobacillus thermodenitrificans (strain NG80-2), this protein is Xylose isomerase.